We begin with the raw amino-acid sequence, 487 residues long: Protein nucleotidyltransferase YdiU (487 aa).

ATP is bound by residues glycine 85, glycine 87, arginine 88, lysine 108, aspartate 120, glycine 121, arginine 171, and arginine 178. The Proton acceptor role is filled by aspartate 247. Asparagine 248 and aspartate 257 together coordinate Mg(2+). Residue aspartate 257 participates in ATP binding.

This sequence belongs to the SELO family. Mg(2+) serves as cofactor. Requires Mn(2+) as cofactor.

It catalyses the reaction L-seryl-[protein] + ATP = 3-O-(5'-adenylyl)-L-seryl-[protein] + diphosphate. The catalysed reaction is L-threonyl-[protein] + ATP = 3-O-(5'-adenylyl)-L-threonyl-[protein] + diphosphate. It carries out the reaction L-tyrosyl-[protein] + ATP = O-(5'-adenylyl)-L-tyrosyl-[protein] + diphosphate. The enzyme catalyses L-histidyl-[protein] + UTP = N(tele)-(5'-uridylyl)-L-histidyl-[protein] + diphosphate. It catalyses the reaction L-seryl-[protein] + UTP = O-(5'-uridylyl)-L-seryl-[protein] + diphosphate. The catalysed reaction is L-tyrosyl-[protein] + UTP = O-(5'-uridylyl)-L-tyrosyl-[protein] + diphosphate. Its function is as follows. Nucleotidyltransferase involved in the post-translational modification of proteins. It can catalyze the addition of adenosine monophosphate (AMP) or uridine monophosphate (UMP) to a protein, resulting in modifications known as AMPylation and UMPylation. The sequence is that of Protein nucleotidyltransferase YdiU from Agrobacterium fabrum (strain C58 / ATCC 33970) (Agrobacterium tumefaciens (strain C58)).